A 482-amino-acid polypeptide reads, in one-letter code: Glutamate--tRNA ligase (482 aa).

The short motif at 9 to 19 (PSPTGPIHVGN) is the 'HIGH' region element. Zn(2+) is bound by residues Cys-106, Cys-108, Cys-133, and Asp-135. A 'KMSKS' region motif is present at residues 250-254 (KLSKR). Lys-253 contributes to the ATP binding site.

Belongs to the class-I aminoacyl-tRNA synthetase family. Glutamate--tRNA ligase type 1 subfamily. As to quaternary structure, monomer. The cofactor is Zn(2+).

The protein resides in the cytoplasm. It carries out the reaction tRNA(Glu) + L-glutamate + ATP = L-glutamyl-tRNA(Glu) + AMP + diphosphate. Catalyzes the attachment of glutamate to tRNA(Glu) in a two-step reaction: glutamate is first activated by ATP to form Glu-AMP and then transferred to the acceptor end of tRNA(Glu). This Symbiobacterium thermophilum (strain DSM 24528 / JCM 14929 / IAM 14863 / T) protein is Glutamate--tRNA ligase.